The chain runs to 230 residues: Small ribosomal subunit protein uS3c (230 aa).

The KH type-2 domain maps to 39 to 109; sequence IRSFIHSKLS…QLRVNVVEIA (71 aa).

This sequence belongs to the universal ribosomal protein uS3 family. Part of the 30S ribosomal subunit.

Its subcellular location is the plastid. It is found in the chloroplast. This chain is Small ribosomal subunit protein uS3c (rps3), found in Pyropia yezoensis (Susabi-nori).